A 356-amino-acid polypeptide reads, in one-letter code: Tyrosine recombinase XerS (356 aa).

The 106-residue stretch at 16–121 (IMPWYVLDYY…ALSSLYKYLT (106 aa)) folds into the Core-binding (CB) domain. A Tyr recombinase domain is found at 169–354 (AFLDYVDKEY…VNDEQKNALD (186 aa)). Catalysis depends on residues Arg210, Lys234, His306, Arg309, and His332. Tyr341 functions as the O-(3'-phospho-DNA)-tyrosine intermediate in the catalytic mechanism.

Belongs to the 'phage' integrase family. XerS subfamily.

It is found in the cytoplasm. With respect to regulation, ftsK is required for recombination. Site-specific tyrosine recombinase, which acts by catalyzing the cutting and rejoining of the recombining DNA molecules. Essential to convert dimers of the bacterial chromosome into monomers to permit their segregation at cell division. In Streptococcus equi subsp. equi (strain 4047), this protein is Tyrosine recombinase XerS.